The following is a 273-amino-acid chain: Protein FAM216A (273 aa).

The tract at residues 1-47 is disordered; it reads MLGQLLPHTARGLGAAEMPGQGPGSDWTERSSSAEPPAVAGTEGGGG.

Belongs to the FAM216 family.

The protein is Protein FAM216A (FAM216A) of Homo sapiens (Human).